The sequence spans 418 residues: MLKSEMNIADFDADLWQAMQDEVERQEQHIELIASENYTSPRVMQAQGSQLTNKYAEGYPHKRYYGGCEFVDKVEDLAIERAKELFGAKYANVQPHSGSQANTAAFMAMMEAGDTFLGMSLAHGGHLTHGSGVNFSGKLYNAVSYGLDESTGEIDYAEVEKLAQEHKPKVIVAGFSAYSGIVDWAKFREIADKVDAYLMVDMAHVAGLVAAGVYPNPVPYAHVVTTTTHKTLAGPRGGLIISGSDDEKLHKKLNSAVFPGNQGGPLCHVIAGKAVAFQEALQPEFKDYQKQVLVNANAMVKTMQARGYKIVSNGTQNHLFLVDLIDKDITGKDADAALGNAFITVNKNAVPNDPRSPFVTSGLRLGTPAITRRGFKEAEAEQVANWICDVLDDIADESKINQVREQVKALCAKFPVYG.

(6S)-5,6,7,8-tetrahydrofolate-binding positions include L121 and 125–127; that span reads GHL. K230 carries the post-translational modification N6-(pyridoxal phosphate)lysine. 356 to 358 is a (6S)-5,6,7,8-tetrahydrofolate binding site; that stretch reads SPF.

The protein belongs to the SHMT family. Homodimer. Requires pyridoxal 5'-phosphate as cofactor.

It localises to the cytoplasm. The enzyme catalyses (6R)-5,10-methylene-5,6,7,8-tetrahydrofolate + glycine + H2O = (6S)-5,6,7,8-tetrahydrofolate + L-serine. Its pathway is one-carbon metabolism; tetrahydrofolate interconversion. The protein operates within amino-acid biosynthesis; glycine biosynthesis; glycine from L-serine: step 1/1. Functionally, catalyzes the reversible interconversion of serine and glycine with tetrahydrofolate (THF) serving as the one-carbon carrier. This reaction serves as the major source of one-carbon groups required for the biosynthesis of purines, thymidylate, methionine, and other important biomolecules. Also exhibits THF-independent aldolase activity toward beta-hydroxyamino acids, producing glycine and aldehydes, via a retro-aldol mechanism. This Idiomarina loihiensis (strain ATCC BAA-735 / DSM 15497 / L2-TR) protein is Serine hydroxymethyltransferase.